A 231-amino-acid polypeptide reads, in one-letter code: L-ribulose-5-phosphate 4-epimerase AraD (231 aa).

Substrate is bound by residues 27-28, 44-45, and 74-75; these read GN, SG, and SS. Residues D76, H95, and H97 each coordinate Zn(2+). Residue D120 is the Proton donor/acceptor of the active site. H171 contacts Zn(2+). Y229 acts as the Proton donor/acceptor in catalysis.

It belongs to the aldolase class II family. AraD/FucA subfamily. As to quaternary structure, homotetramer. Requires Zn(2+) as cofactor.

It carries out the reaction L-ribulose 5-phosphate = D-xylulose 5-phosphate. Its pathway is carbohydrate degradation; L-arabinose degradation via L-ribulose; D-xylulose 5-phosphate from L-arabinose (bacterial route): step 3/3. Its activity is regulated as follows. Inhibited by glycolohydroxamate at concentration above 0.1 mM. In terms of biological role, involved in the degradation of L-arabinose. Catalyzes the interconversion of L-ribulose 5-phosphate (LRu5P) and D-xylulose 5-phosphate (D-Xu5P) via a retroaldol/aldol mechanism (carbon-carbon bond cleavage analogous to a class II aldolase reaction). This Escherichia coli (strain K12) protein is L-ribulose-5-phosphate 4-epimerase AraD.